A 498-amino-acid chain; its full sequence is ATP synthase subunit beta, chloroplastic (498 aa).

Phosphothreonine is present on threonine 6. Phosphoserine is present on serine 13. Residue glycine 172 to threonine 179 participates in ATP binding.

This sequence belongs to the ATPase alpha/beta chains family. F-type ATPases have 2 components, CF(1) - the catalytic core - and CF(0) - the membrane proton channel. CF(1) has five subunits: alpha(3), beta(3), gamma(1), delta(1), epsilon(1). CF(0) has four main subunits: a(1), b(1), b'(1) and c(9-12).

It localises to the plastid. The protein localises to the chloroplast thylakoid membrane. It catalyses the reaction ATP + H2O + 4 H(+)(in) = ADP + phosphate + 5 H(+)(out). In terms of biological role, produces ATP from ADP in the presence of a proton gradient across the membrane. The catalytic sites are hosted primarily by the beta subunits. The chain is ATP synthase subunit beta, chloroplastic from Olimarabidopsis pumila (Dwarf rocket).